A 349-amino-acid polypeptide reads, in one-letter code: Probable FBD-associated F-box protein At5g38565 (349 aa).

An F-box domain is found at 1–47 (MDIFNGLPDDVLVKILSFVPTKVAVSTSILSKRWEFLWMWLPRLDFG). The FBD domain occupies 263 to 311 (CWNQPISVPECLLESLQIFNLSHYFGKQQDLDFVVYILKNACHLKTATI).

This chain is Probable FBD-associated F-box protein At5g38565, found in Arabidopsis thaliana (Mouse-ear cress).